Reading from the N-terminus, the 313-residue chain is Olfactory receptor 1J2 (313 aa).

Over 1 to 25 the chain is Extracellular; sequence MSPENQSSVSEFLLLGLPIRPEQQA. The N-linked (GlcNAc...) asparagine glycan is linked to Asn-5. A helical membrane pass occupies residues 26 to 49; sequence VFFTLFLGMYLTTVLGNLLIMLLI. Over 50-57 the chain is Cytoplasmic; sequence QLDSHLHT. The helical transmembrane segment at 58-79 threads the bilayer; that stretch reads PMYFFLSHLALTDISFSSVTVP. Residues 80–100 lie on the Extracellular side of the membrane; it reads KMLMDMRTKYKSILYEECISQ. Cys-97 and Cys-189 form a disulfide bridge. The chain crosses the membrane as a helical span at residues 101–120; that stretch reads MYFFIFFTDLDSFLITSMAY. Over 121–139 the chain is Cytoplasmic; the sequence is DRYVAICHPLHYTVIMREE. The helical transmembrane segment at 140 to 158 threads the bilayer; sequence LCVFLVAVSWILSCASSLS. Over 159–196 the chain is Extracellular; it reads HTLLLTRLSFCAANTIPHVFCDLAALLKLSCSDIFLNE. A helical transmembrane segment spans residues 197–219; it reads LVMFTVGVVVITLPFMCILVSYG. Topologically, residues 220–236 are cytoplasmic; it reads YIGATILRVPSTKGIHK. A helical transmembrane segment spans residues 237–259; sequence ALSTCGSHLSVVSLYYGSIFGQY. Residues 260–272 lie on the Extracellular side of the membrane; sequence LFPTVSSSIDKDV. A helical membrane pass occupies residues 273–292; that stretch reads IVALMYTVVTPMLNPFIYSL. The Cytoplasmic portion of the chain corresponds to 293–313; it reads RNRDMKEALGKLFSRATFFSW.

The protein belongs to the G-protein coupled receptor 1 family.

Its subcellular location is the cell membrane. Odorant receptor. This chain is Olfactory receptor 1J2 (OR1J2), found in Homo sapiens (Human).